The chain runs to 533 residues: UDP-glucuronosyltransferase 1-2 (533 aa).

An N-terminal signal peptide occupies residues 1 to 27 (MDTGLCAPLRGLSGLLLLLCALPWAEG). 4 N-linked (GlcNAc...) asparagine glycosylation sites follow: Asn-133, Asn-141, Asn-295, and Asn-433. Residues 491-507 (VIGFLLAIVLTVVFIVY) form a helical membrane-spanning segment.

The protein belongs to the UDP-glycosyltransferase family.

The protein resides in the microsome. The protein localises to the endoplasmic reticulum membrane. It catalyses the reaction glucuronate acceptor + UDP-alpha-D-glucuronate = acceptor beta-D-glucuronoside + UDP + H(+). In terms of biological role, UDPGT is of major importance in the conjugation and subsequent elimination of potentially toxic xenobiotics and endogenous compounds. This chain is UDP-glucuronosyltransferase 1-2 (Ugt1a2), found in Rattus norvegicus (Rat).